Here is a 333-residue protein sequence, read N- to C-terminus: MIETLLQSPSSWTNFFIFFGLAVLLLFAVLGFVTYGILAERKVMGFMQGRIGPNQVGGRFGLLQTVADVLKLLLKEDSIPKAADKPLFILAPVIAFAPAFMVLAVIPFTDKFQFADIGVGLLYYIAVSGITTIGVVTGGWASNNKYSLLGGMRAAAQMISYEIPLVMSVIGIVLLAGSLNLNEIVAAQEKVWYIFVQPIGFVVFLIAAVAELNRTPFDLPEAESELVSGYHTEYSGFRWAFFMLSEYVYFFGMASLITVLFLGGWNPVMFLGFIPGAVWFALKFSSVVFLLIWFRVTFPRIRGDQLMEFGWKVLLPIALANIFLTALIKELFF.

Transmembrane regions (helical) follow at residues 15-35 (FFIFFGLAVLLLFAVLGFVTY), 88-108 (FILAPVIAFAPAFMVLAVIPF), 117-137 (IGVGLLYYIAVSGITTIGVVT), 159-179 (ISYEIPLVMSVIGIVLLAGSL), 191-211 (VWYIFVQPIGFVVFLIAAVAE), 239-259 (WAFFMLSEYVYFFGMASLITV), 274-296 (IPGAVWFALKFSSVVFLLIWFRV), and 313-333 (VLLPIALANIFLTALIKELFF).

Belongs to the complex I subunit 1 family. As to quaternary structure, NDH-1 is composed of 14 different subunits. Subunits NuoA, H, J, K, L, M, N constitute the membrane sector of the complex.

It localises to the cell membrane. The catalysed reaction is a quinone + NADH + 5 H(+)(in) = a quinol + NAD(+) + 4 H(+)(out). Its function is as follows. NDH-1 shuttles electrons from NADH, via FMN and iron-sulfur (Fe-S) centers, to quinones in the respiratory chain. The immediate electron acceptor for the enzyme in this species is believed to be ubiquinone. Couples the redox reaction to proton translocation (for every two electrons transferred, four hydrogen ions are translocated across the cytoplasmic membrane), and thus conserves the redox energy in a proton gradient. This subunit may bind ubiquinone. The polypeptide is NADH-quinone oxidoreductase subunit H (Bacillus cereus (strain G9842)).